Consider the following 224-residue polypeptide: Peptidyl-prolyl cis-trans isomerase CYP21-1 (224 aa).

The N-terminal stretch at 1–27 (MRREISFLLQPRCLLLLVALTIFLVFA) is a signal peptide. The PPIase cyclophilin-type domain occupies 50–214 (FLDVDIDGQR…KKVVIADSGE (165 aa)). N-linked (GlcNAc...) asparagine glycosylation occurs at Asn-158.

Belongs to the cyclophilin-type PPIase family. Ubiquitous.

Its subcellular location is the endoplasmic reticulum. The catalysed reaction is [protein]-peptidylproline (omega=180) = [protein]-peptidylproline (omega=0). PPIases accelerate the folding of proteins. It catalyzes the cis-trans isomerization of proline imidic peptide bonds in oligopeptides. This is Peptidyl-prolyl cis-trans isomerase CYP21-1 (CYP21-1) from Arabidopsis thaliana (Mouse-ear cress).